A 327-amino-acid polypeptide reads, in one-letter code: Probable cell division protein WhiA (327 aa).

A DNA-binding region (H-T-H motif) is located at residues Ser275 to Lys308.

This sequence belongs to the WhiA family.

In terms of biological role, involved in cell division and chromosome segregation. The polypeptide is Probable cell division protein WhiA (Mycobacterium bovis (strain ATCC BAA-935 / AF2122/97)).